We begin with the raw amino-acid sequence, 1107 residues long: DNA polymerase delta catalytic subunit (1107 aa).

The interval 1–34 is disordered; sequence MDGKRRPGPGPGVPPKRARGGLWDDDDAPRPSQF. The Nuclear localization signal signature appears at 4 to 19; it reads KRRPGPGPGVPPKRAR. Omega-N-methylarginine is present on Arg19. A Glycyl lysine isopeptide (Lys-Gly) (interchain with G-Cter in SUMO2) cross-link involves residue Lys574. Residues Cys1012, Cys1015, Cys1026, and Cys1029 each contribute to the Zn(2+) site. The CysA-type zinc-finger motif lies at 1012 to 1029; the sequence is CIGCRTVLSHQGAVCEFC. Residues Cys1058, Cys1061, Cys1071, and Cys1076 each coordinate [4Fe-4S] cluster. The CysB motif motif lies at 1058 to 1076; that stretch reads CQRCQGSLHEDVICTSRDC.

This sequence belongs to the DNA polymerase type-B family. Component of the tetrameric DNA polymerase delta complex (Pol-delta4), which consists of POLD1/p125, POLD2/p50, POLD3/p66/p68 and POLD4/p12, with POLD1 bearing both DNA polymerase and 3' to 5' proofreading exonuclease activities. Within Pol-delta4, directly interacts with POLD2 and POLD4. Following genotoxic stress by DNA-damaging agents, such as ultraviolet light and methyl methanesulfonate, or by replication stress induced by treatment with hydroxyurea or aphidicolin, Pol-delta4 is converted into a trimeric form of the complex (Pol-delta3) by POLD4 degradation. Pol-delta3 is the major form at S phase replication sites and DNA damage sites. POLD1 displays different catalytic properties depending upon the complex it is found in. It exhibits higher proofreading activity and fidelity than Pol-delta4, making it particularly well suited to respond to DNA damage. Directly interacts with PCNA, as do POLD3 and POLD4; this interaction stimulates Pol-delta4 polymerase activity. As POLD2 and POLD4, directly interacts with WRNIP1; this interaction stimulates DNA polymerase delta-mediated DNA synthesis, independently of the presence of PCNA. This stimulation may be due predominantly to an increase of initiation frequency and also to increased processivity. Also observed as a dimeric complex with POLD2 (Pol-delta2 complex). Pol-delta2 is relatively insensitive to the PCNA stimulation (2-5-fold) compared to Pol-delta4 that is stimulated by over 50-fold. The DNA polymerase delta complex interacts with POLDIP2; this interaction is probably mediated through direct binding to POLD2. Interacts with CIAO1. Interacts with POLDIP2. Interacts with RFC1. The cofactor is [4Fe-4S] cluster. As to expression, widely expressed, with high levels of expression in heart and lung.

It is found in the nucleus. It carries out the reaction DNA(n) + a 2'-deoxyribonucleoside 5'-triphosphate = DNA(n+1) + diphosphate. Regulated by alteration of quaternary structure. Exhibits burst rates of DNA synthesis are about 5 times faster in the presence of POLD4 (Pol-delta4 complex) than in its absence (Pol-delta3 complex), while the affinity of the enzyme for its DNA and dNTP substrates appears unchanged. The Pol-delta3 complex is more likely to proofread DNA synthesis because it cleaves single-stranded DNA twice as fast and transfers mismatched DNA from the polymerase to the exonuclease sites 9 times faster compared to the Pol-delta3 complex. Pol-delta3 also extends mismatched primers 3 times more slowly in the absence of POLD4. The conversion of Pol-delta4 into Pol-delta3 is induced by genotoxic stress or by replication stress leading POLD4 degradation. Stimulated in the presence of PCNA. This stimulation is further increased in the presence of KCTD13/PDIP1, most probably via direct interaction between KCTD13 and POLD2. Its function is as follows. As the catalytic component of the trimeric (Pol-delta3 complex) and tetrameric DNA polymerase delta complexes (Pol-delta4 complex), plays a crucial role in high fidelity genome replication, including in lagging strand synthesis, and repair. Exhibits both DNA polymerase and 3'- to 5'-exonuclease activities. Requires the presence of accessory proteins POLD2, POLD3 and POLD4 for full activity. Depending upon the absence (Pol-delta3) or the presence of POLD4 (Pol-delta4), displays differences in catalytic activity. Most notably, expresses higher proofreading activity in the context of Pol-delta3 compared with that of Pol-delta4. Although both Pol-delta3 and Pol-delta4 process Okazaki fragments in vitro, Pol-delta3 may be better suited to fulfill this task, exhibiting near-absence of strand displacement activity compared to Pol-delta4 and stalling on encounter with the 5'-blocking oligonucleotides. Pol-delta3 idling process may avoid the formation of a gap, while maintaining a nick that can be readily ligated. Along with DNA polymerase kappa, DNA polymerase delta carries out approximately half of nucleotide excision repair (NER) synthesis following UV irradiation. Under conditions of DNA replication stress, in the presence of POLD3 and POLD4, may catalyze the repair of broken replication forks through break-induced replication (BIR). Involved in the translesion synthesis (TLS) of templates carrying O6-methylguanine, 8oxoG or abasic sites. The polypeptide is DNA polymerase delta catalytic subunit (Homo sapiens (Human)).